A 403-amino-acid polypeptide reads, in one-letter code: GPI mannosyltransferase 1 (403 aa).

At 1-4 (MTGE) the chain is on the cytoplasmic side. The helical transmembrane segment at 5–25 (EWGLTVLSFLVRVGFFLFGIY) threads the bilayer. Residues 26–78 (QDANFKVRYTDIDYFVFHDAAKYVYEGKSPYARDTYRYTPLLSWLLVPNHYFG) lie on the Lumenal side of the membrane. A helical membrane pass occupies residues 79-99 (WFHLGKVIFVIFDLVTGLIIM). Topologically, residues 100–110 (KLLNQAISRKR) are cytoplasmic. The chain crosses the membrane as a helical span at residues 111-131 (ALILESIWLLNPMVITISTRG). Position 132 (N132) is a topological domain, lumenal. The helical transmembrane segment at 133–149 (AESVLCCLIMFTLFFLQ) threads the bilayer. The Cytoplasmic segment spans residues 150–160 (KSRYTLAGILY). Residues 161–181 (GLSIHFKIYPIIYCIPIAIFI) traverse the membrane as a helical segment. At 182–193 (YYNKRNQGPRTQ) the chain is on the lumenal side. A helical membrane pass occupies residues 194 to 214 (LTSLLNIGLSTLTTLLGCGWA). The Cytoplasmic segment spans residues 215–266 (MYKIYGYEFLDQAYLYHLYRTDHRHNFSVWNMLLYLDSANKENGESNLSRYA). The helical transmembrane segment at 267-287 (FVPQLLLVLVTGCLEWWNPTF) threads the bilayer. The Lumenal portion of the chain corresponds to 288-310 (DNLLRVLFVQTFAFVTYNKVCTS). Residues 311–331 (QYFVWYLIFLPFYLSRTHIGW) traverse the membrane as a helical segment. Residues 332–334 (KKG) lie on the Cytoplasmic side of the membrane. Residues 335–355 (LLMATLWVGTQGIWLSQGYYL) form a helical membrane-spanning segment. Over 356 to 361 (EFEGKN) the chain is Lumenal. Residues 362-382 (VFYPGLFIASVLFFVTNVWLL) form a helical membrane-spanning segment. Topologically, residues 383–403 (GQFITDIKIPTQPTVSNKKNN) are cytoplasmic.

This sequence belongs to the PIGM family.

The protein resides in the endoplasmic reticulum membrane. It functions in the pathway glycolipid biosynthesis; glycosylphosphatidylinositol-anchor biosynthesis. Functionally, mannosyltransferase involved in glycosylphosphatidylinositol-anchor biosynthesis. Transfers the first alpha-1,4-mannose to GlcN-acyl-PI during GPI precursor assembly. Required for cell wall integrity. In Saccharomyces cerevisiae (strain ATCC 204508 / S288c) (Baker's yeast), this protein is GPI mannosyltransferase 1 (GPI14).